A 132-amino-acid chain; its full sequence is MGLIVYYSSATGNTEYFVSQLDQRLFKIDKKKPSMLVDEPYVLVVPTYADGEGKMAVPKAVIRFLNEDENRKLIRGVIGGGNRNFGRYYSLASKIIAEKCFVPCLYRFELRGTEEDIICVKKGLERFWKQLV.

The protein belongs to the NrdI family.

In terms of biological role, probably involved in ribonucleotide reductase function. This Bartonella henselae (strain ATCC 49882 / DSM 28221 / CCUG 30454 / Houston 1) (Rochalimaea henselae) protein is Protein NrdI.